A 56-amino-acid polypeptide reads, in one-letter code: Small ribosomal subunit protein eS31 (56 aa).

Zn(2+) is bound by residues Cys28, Cys31, Cys46, and Cys49. The C4-type zinc finger occupies 28–49; the sequence is CPRCGPGVFMANHKDRWSCGRC.

It belongs to the eukaryotic ribosomal protein eS31 family. In terms of assembly, part of the 30S ribosomal subunit. Requires Zn(2+) as cofactor.

The polypeptide is Small ribosomal subunit protein eS31 (Thermococcus gammatolerans (strain DSM 15229 / JCM 11827 / EJ3)).